A 216-amino-acid polypeptide reads, in one-letter code: DNA gyrase subunit B (216 aa).

The region spanning 140 to 216 (SELYLVEGDS…PDKLRYHKII (77 aa)) is the Toprim domain.

Belongs to the type II topoisomerase GyrB family. In terms of assembly, heterotetramer, composed of two GyrA and two GyrB chains. In the heterotetramer, GyrA contains the active site tyrosine that forms a transient covalent intermediate with DNA, while GyrB binds cofactors and catalyzes ATP hydrolysis.

Its subcellular location is the cytoplasm. It carries out the reaction ATP-dependent breakage, passage and rejoining of double-stranded DNA.. Its function is as follows. A type II topoisomerase that negatively supercoils closed circular double-stranded (ds) DNA in an ATP-dependent manner to modulate DNA topology and maintain chromosomes in an underwound state. Negative supercoiling favors strand separation, and DNA replication, transcription, recombination and repair, all of which involve strand separation. Also able to catalyze the interconversion of other topological isomers of dsDNA rings, including catenanes and knotted rings. Type II topoisomerases break and join 2 DNA strands simultaneously in an ATP-dependent manner. This chain is DNA gyrase subunit B (gyrB), found in Acinetobacter sp. (strain T4).